Reading from the N-terminus, the 346-residue chain is D-alanine--D-alanine ligase (346 aa).

Positions 133–327 constitute an ATP-grasp domain; it reads KLYAKSVGVK…ALADQISLEK (195 aa). 159–211 is an ATP binding site; that stretch reads LSFPCIIKPARLGSSIGISIVKDEKDLEYAKDVGFEFDNDLVVEEFKNNIKEY. Mg(2+)-binding residues include Asp-284, Glu-296, and Asn-298.

It belongs to the D-alanine--D-alanine ligase family. Mg(2+) serves as cofactor. Mn(2+) is required as a cofactor.

It localises to the cytoplasm. The catalysed reaction is 2 D-alanine + ATP = D-alanyl-D-alanine + ADP + phosphate + H(+). The protein operates within cell wall biogenesis; peptidoglycan biosynthesis. Cell wall formation. The polypeptide is D-alanine--D-alanine ligase (Campylobacter jejuni subsp. jejuni serotype O:23/36 (strain 81-176)).